A 358-amino-acid chain; its full sequence is GDSL esterase/lipase EXL5 (358 aa).

A signal peptide spans 1-21 (MFRKKMLVLALFSIYFLSIEA). The N-linked (GlcNAc...) asparagine glycan is linked to asparagine 24. Serine 36 (nucleophile) is an active-site residue. Active-site residues include aspartate 333 and histidine 336.

Belongs to the 'GDSL' lipolytic enzyme family. As to expression, flower buds.

The protein resides in the secreted. The protein is GDSL esterase/lipase EXL5 (EXL5) of Arabidopsis thaliana (Mouse-ear cress).